The primary structure comprises 268 residues: Undecaprenyl-diphosphatase (268 aa).

7 helical membrane-spanning segments follow: residues 42–62, 86–106, 108–128, 158–178, 184–204, 218–238, and 246–266; these read VPGKVFEVVIQLGAILAICVL, AIFVALIPAGLLGVLYHDFIL, VLFTPYVVCAALITGGIAIVV, IALVPGVSRSGATILGALLVG, AAEFSFFLAIPVMLGASVVSL, LIAAGFIAAFISALLVVKWLV, and FTVFGWYRILFGSLLLIYFSL.

Belongs to the UppP family.

The protein localises to the cell inner membrane. It carries out the reaction di-trans,octa-cis-undecaprenyl diphosphate + H2O = di-trans,octa-cis-undecaprenyl phosphate + phosphate + H(+). Catalyzes the dephosphorylation of undecaprenyl diphosphate (UPP). Confers resistance to bacitracin. This chain is Undecaprenyl-diphosphatase, found in Parvibaculum lavamentivorans (strain DS-1 / DSM 13023 / NCIMB 13966).